The following is a 51-amino-acid chain: 2,3,4,5-tetrahydropyridine-2,6-dicarboxylate N-succinyltransferase (51 aa).

It belongs to the transferase hexapeptide repeat family. In terms of assembly, homotrimer.

The protein resides in the cytoplasm. It carries out the reaction (S)-2,3,4,5-tetrahydrodipicolinate + succinyl-CoA + H2O = (S)-2-succinylamino-6-oxoheptanedioate + CoA. Its pathway is amino-acid biosynthesis; L-lysine biosynthesis via DAP pathway; LL-2,6-diaminopimelate from (S)-tetrahydrodipicolinate (succinylase route): step 1/3. The protein is 2,3,4,5-tetrahydropyridine-2,6-dicarboxylate N-succinyltransferase (dapD) of Klebsiella oxytoca.